The sequence spans 228 residues: Endonuclease V (228 aa).

The Mg(2+) site is built by aspartate 36 and aspartate 104.

The protein belongs to the endonuclease V family. Mg(2+) is required as a cofactor.

It is found in the cytoplasm. The enzyme catalyses Endonucleolytic cleavage at apurinic or apyrimidinic sites to products with a 5'-phosphate.. Functionally, DNA repair enzyme involved in the repair of deaminated bases. Selectively cleaves double-stranded DNA at the second phosphodiester bond 3' to a deoxyinosine leaving behind the intact lesion on the nicked DNA. This is Endonuclease V from Serratia proteamaculans (strain 568).